The primary structure comprises 344 residues: MFSCIACTKADGGEEVEHGARGGTTPNTKEAVKSLTIQIKDMALKFSGAYKQCKPCTGSSSSPLKKGHRSFPDYDNASEGVPYPFMGGSAGSTPAWDFTNSSHHPAGRLESKFTSIYGNDRESISAQSCDVVLDDDGPKEWMAQVEPGVHITFASLPTGGNDLKRIRFSREMFDKWQAQRWWGENYDKIVELYNVQRFNRQALQTPARSDDQSQRDSTYSKMDSARESKDWTPRHNFRPPGSVPHHFYGGSSNYGPGSYHGGPPMDAARTTTSSRDDPPSMSNASEMQAEWIEEDEPGVYITIRQLSDGTRELRRVRFSRERFGEVHAKTWWEQNRERIQTQYL.

Residues 139–194 (KEWMAQVEPGVHITFASLPTGGNDLKRIRFSREMFDKWQAQRWWGENYDKIVELYN) form the BRX 1 domain. The disordered stretch occupies residues 203–286 (LQTPARSDDQ…DPPSMSNASE (84 aa)). Residues 223–233 (DSARESKDWTP) are compositionally biased toward basic and acidic residues. The segment covering 248–264 (YGGSSNYGPGSYHGGPP) has biased composition (low complexity). The BRX 2 domain occupies 289 to 344 (AEWIEEDEPGVYITIRQLSDGTRELRRVRFSRERFGEVHAKTWWEQNRERIQTQYL).

This sequence belongs to the BRX family. As to quaternary structure, homodimer and heterodimer with BRXL1. Interacts with NGA1 and ARF5. In terms of tissue distribution, expressed in the developing protophloem up to the elongation zone in root meristem of young seedlings, in the columella and the phloem vasculature throughout the root and in the phloem vasculature in the shoot. Detected in the shoot meristem and in primordia. Low expression in stomata. Confined to sieve element precursor cells and to protophloem.

It localises to the nucleus. The protein localises to the cell membrane. Acts as a regulator of cell proliferation and elongation in the root and shoot. Regulates roots architecture and primary root protophloem differentiation. BRX, BAM3, and CLE45 act together to regulate the transition of protophloem cells from proliferation to differentiation, thus impinging on postembryonic growth capacity of the root meristem. Probable transcription regulator. Regulated by the auxin response factor ARF5. Polarly localized in vascular cells and subject to endocytic recycling. Required for CPD expression and for correct nuclear auxin response. Mediates cross-talk between the auxin and brassinosteroid pathways. BRX is a target for auxin-induced, proteasome-mediated degradation. The chain is Protein BREVIS RADIX from Arabidopsis thaliana (Mouse-ear cress).